Consider the following 647-residue polypeptide: Acetyl-coenzyme A synthetase (647 aa).

CoA contacts are provided by residues 190 to 193 (RGGK), threonine 310, and asparagine 334. ATP is bound by residues 386–388 (GEP), 410–415 (DTWWQT), aspartate 499, and arginine 514. Serine 522 is a binding site for CoA. Arginine 525 is a binding site for ATP. The Mg(2+) site is built by valine 536, histidine 538, and valine 541. Arginine 583 provides a ligand contact to CoA. Lysine 608 is subject to N6-acetyllysine.

It belongs to the ATP-dependent AMP-binding enzyme family. The cofactor is Mg(2+). In terms of processing, acetylated. Deacetylation by the SIR2-homolog deacetylase activates the enzyme.

The enzyme catalyses acetate + ATP + CoA = acetyl-CoA + AMP + diphosphate. Its function is as follows. Catalyzes the conversion of acetate into acetyl-CoA (AcCoA), an essential intermediate at the junction of anabolic and catabolic pathways. AcsA undergoes a two-step reaction. In the first half reaction, AcsA combines acetate with ATP to form acetyl-adenylate (AcAMP) intermediate. In the second half reaction, it can then transfer the acetyl group from AcAMP to the sulfhydryl group of CoA, forming the product AcCoA. The sequence is that of Acetyl-coenzyme A synthetase from Xanthomonas campestris pv. campestris (strain 8004).